We begin with the raw amino-acid sequence, 222 residues long: Probable transaldolase (222 aa).

Catalysis depends on Lys-91, which acts as the Schiff-base intermediate with substrate.

It belongs to the transaldolase family. Type 3B subfamily.

It is found in the cytoplasm. It carries out the reaction D-sedoheptulose 7-phosphate + D-glyceraldehyde 3-phosphate = D-erythrose 4-phosphate + beta-D-fructose 6-phosphate. The protein operates within carbohydrate degradation; pentose phosphate pathway; D-glyceraldehyde 3-phosphate and beta-D-fructose 6-phosphate from D-ribose 5-phosphate and D-xylulose 5-phosphate (non-oxidative stage): step 2/3. Transaldolase is important for the balance of metabolites in the pentose-phosphate pathway. This Chlorobium limicola (strain DSM 245 / NBRC 103803 / 6330) protein is Probable transaldolase.